A 408-amino-acid chain; its full sequence is 1-deoxy-D-xylulose 5-phosphate reductoisomerase (408 aa).

5 residues coordinate NADPH: threonine 26, glycine 27, serine 28, isoleucine 29, and asparagine 143. A 1-deoxy-D-xylulose 5-phosphate-binding site is contributed by lysine 144. Glutamate 145 contacts NADPH. Residue aspartate 167 participates in Mn(2+) binding. Residues serine 168, glutamate 169, serine 193, and histidine 216 each coordinate 1-deoxy-D-xylulose 5-phosphate. Glutamate 169 provides a ligand contact to Mn(2+). An NADPH-binding site is contributed by glycine 222. 1-deoxy-D-xylulose 5-phosphate contacts are provided by serine 229, asparagine 234, lysine 235, and glutamate 238. Glutamate 238 is a Mn(2+) binding site.

The protein belongs to the DXR family. Mg(2+) is required as a cofactor. The cofactor is Mn(2+).

The enzyme catalyses 2-C-methyl-D-erythritol 4-phosphate + NADP(+) = 1-deoxy-D-xylulose 5-phosphate + NADPH + H(+). Its pathway is isoprenoid biosynthesis; isopentenyl diphosphate biosynthesis via DXP pathway; isopentenyl diphosphate from 1-deoxy-D-xylulose 5-phosphate: step 1/6. Catalyzes the NADPH-dependent rearrangement and reduction of 1-deoxy-D-xylulose-5-phosphate (DXP) to 2-C-methyl-D-erythritol 4-phosphate (MEP). This is 1-deoxy-D-xylulose 5-phosphate reductoisomerase from Corynebacterium jeikeium (strain K411).